A 679-amino-acid chain; its full sequence is tRNA uridine 5-carboxymethylaminomethyl modification enzyme MnmG (679 aa).

13–18 (GGGHAG) is an FAD binding site. 280–294 (GPRYCPSVEDKINRF) is a binding site for NAD(+).

This sequence belongs to the MnmG family. As to quaternary structure, homodimer. Heterotetramer of two MnmE and two MnmG subunits. It depends on FAD as a cofactor.

The protein resides in the cytoplasm. Its function is as follows. NAD-binding protein involved in the addition of a carboxymethylaminomethyl (cmnm) group at the wobble position (U34) of certain tRNAs, forming tRNA-cmnm(5)s(2)U34. The chain is tRNA uridine 5-carboxymethylaminomethyl modification enzyme MnmG from Albidiferax ferrireducens (strain ATCC BAA-621 / DSM 15236 / T118) (Rhodoferax ferrireducens).